We begin with the raw amino-acid sequence, 65 residues long: Putative beta-neurotoxin RjAa12 (65 aa).

One can recognise an LCN-type CS-alpha/beta domain in the interval Lys-1–Gly-64. Disulfide bonds link Cys-11–Cys-63, Cys-15–Cys-37, Cys-22–Cys-44, and Cys-26–Cys-46.

The protein belongs to the long (4 C-C) scorpion toxin superfamily. Sodium channel inhibitor family. Beta subfamily. As to expression, expressed by the venom gland.

The protein localises to the secreted. In terms of biological role, beta toxins bind voltage-independently at site-4 of sodium channels (Nav) and shift the voltage of activation toward more negative potentials thereby affecting sodium channel activation and promoting spontaneous and repetitive firing. The protein is Putative beta-neurotoxin RjAa12 of Rhopalurus junceus (Caribbean blue scorpion).